Reading from the N-terminus, the 193-residue chain is T-cell receptor-associated transmembrane adapter 1 (193 aa).

Topologically, residues Met-1 to Ser-10 are extracellular. Residues Ile-11 to Phe-31 form a helical; Signal-anchor for type III membrane protein membrane-spanning segment. At His-32–Gln-193 the chain is on the cytoplasmic side. The residue at position 46 (Ser-46) is a Phosphoserine. Tyr-80 carries the phosphotyrosine modification. The segment at Tyr-80–Met-83 is interaction with PIK3R1. Residues Asn-116–Ile-166 form a disordered region. Residues Lys-119–Ser-128 are compositionally biased toward basic residues. The span at His-129–Ser-145 shows a compositional bias: basic and acidic residues.

In terms of assembly, homodimer; disulfide-linked. Interacts with CD3Z. When phosphorylated, interacts with PIK3R1. In terms of processing, phosphorylated on tyrosines upon TCR activation.

The protein localises to the cell membrane. Stabilizes the TCR (T-cell antigen receptor)/CD3 complex at the surface of T-cells. The polypeptide is T-cell receptor-associated transmembrane adapter 1 (TRAT1) (Bos taurus (Bovine)).